Consider the following 487-residue polypeptide: FAD-dependent oxidoreductase domain-containing protein 1 (487 aa).

The chain crosses the membrane as a helical span at residues 62-82; that stretch reads EQADVVIIGGGILGLSVAFWL.

Associates with components of the mitochondrial respiratory chain complex I. Requires FAD as cofactor.

The protein resides in the mitochondrion inner membrane. In terms of biological role, required for the assembly of the mitochondrial membrane respiratory chain NADH dehydrogenase (Complex I). Involved in mid-late stages of complex I assembly. The chain is FAD-dependent oxidoreductase domain-containing protein 1 (Foxred1) from Mus musculus (Mouse).